Reading from the N-terminus, the 268-residue chain is GTP cyclohydrolase FolE2 (268 aa).

This sequence belongs to the GTP cyclohydrolase IV family.

The enzyme catalyses GTP + H2O = 7,8-dihydroneopterin 3'-triphosphate + formate + H(+). Its pathway is cofactor biosynthesis; 7,8-dihydroneopterin triphosphate biosynthesis; 7,8-dihydroneopterin triphosphate from GTP: step 1/1. Functionally, converts GTP to 7,8-dihydroneopterin triphosphate. The sequence is that of GTP cyclohydrolase FolE2 from Ralstonia nicotianae (strain ATCC BAA-1114 / GMI1000) (Ralstonia solanacearum).